The primary structure comprises 514 residues: Serine--tRNA ligase, cytoplasmic (514 aa).

The residue at position 1 (methionine 1) is an N-acetylmethionine. The segment at 9–61 (RVDKGGDPALIRETQEKRFKDPGLVDQLVKADSEWRRCRFRADNLNKLKNLCS) is interaction with tRNA. Serine 241 carries the phosphoserine modification. L-serine is bound by residues threonine 271 and arginine 302. ATP is bound by residues 302–304 (RQE) and 318–321 (VHQF). Lysine 323 carries the N6-acetyllysine modification. Glutamate 325 is a binding site for L-serine. 391-394 (ELVS) is a binding site for ATP. Asparagine 427 lines the L-serine pocket. A disordered region spans residues 473-514 (PAPIEQEPSKKQKKQHEGSKKKAAARDVTLENRLQNMEVTDA). Over residues 479-502 (EPSKKQKKQHEGSKKKAAARDVTL) the composition is skewed to basic and acidic residues. Residues 482 to 494 (KKQKKQHEGSKKK) carry the Nuclear localization signal motif. A compositionally biased stretch (polar residues) spans 504–514 (NRLQNMEVTDA).

This sequence belongs to the class-II aminoacyl-tRNA synthetase family. Type-1 seryl-tRNA synthetase subfamily. As to quaternary structure, homodimer. The tRNA molecule may bind across the dimer. Interacts with SIRT2. Interacts with METTL6; interaction is required for the tRNA N(3)-methylcytidine methyltransferase activity of METTL6. Brain.

Its subcellular location is the cytoplasm. It localises to the nucleus. It catalyses the reaction tRNA(Ser) + L-serine + ATP = L-seryl-tRNA(Ser) + AMP + diphosphate + H(+). It carries out the reaction tRNA(Sec) + L-serine + ATP = L-seryl-tRNA(Sec) + AMP + diphosphate + H(+). The protein operates within aminoacyl-tRNA biosynthesis; selenocysteinyl-tRNA(Sec) biosynthesis; L-seryl-tRNA(Sec) from L-serine and tRNA(Sec): step 1/1. Catalyzes the attachment of serine to tRNA(Ser) in a two-step reaction: serine is first activated by ATP to form Ser-AMP and then transferred to the acceptor end of tRNA(Ser). Is probably also able to aminoacylate tRNA(Sec) with serine, to form the misacylated tRNA L-seryl-tRNA(Sec), which will be further converted into selenocysteinyl-tRNA(Sec). In the nucleus, binds to the VEGFA core promoter and prevents MYC binding and transcriptional activation by MYC. Recruits SIRT2 to the VEGFA promoter, promoting deacetylation of histone H4 at 'Lys-16' (H4K16). Thereby, inhibits the production of VEGFA and sprouting angiogenesis mediated by VEGFA. This Homo sapiens (Human) protein is Serine--tRNA ligase, cytoplasmic.